The primary structure comprises 122 residues: Crustacean hyperglycemic hormones 5 (122 aa).

The signal sequence occupies residues 1 to 26 (MSLGLIASRLVAVALVVVVACSTTWA). Disulfide bonds link cysteine 55–cysteine 91, cysteine 71–cysteine 87, and cysteine 74–cysteine 100. The residue at position 120 (valine 120) is a Valine amide.

This sequence belongs to the arthropod CHH/MIH/GIH/VIH hormone family.

Its subcellular location is the secreted. Its function is as follows. Hormone found in the sinus gland of isopods and decapods which controls the blood sugar level. Has a secretagogue action over the amylase released from the midgut gland. May act as a stress hormone and may be involved in the control of molting and reproduction. This is Crustacean hyperglycemic hormones 5 (CHH5) from Penaeus monodon (Giant tiger prawn).